The following is a 150-amino-acid chain: Ribonuclease K6 (150 aa).

The first 23 residues, 1–23 (MVLCFPLLLLVLVLWGQVCPLHA), serve as a signal peptide directing secretion. Catalysis depends on His-38, which acts as the Proton acceptor. Disulfide bonds link Cys-46-Cys-104, Cys-60-Cys-114, Cys-78-Cys-129, and Cys-85-Cys-92. N-linked (GlcNAc...) asparagine glycosylation occurs at Asn-55. Residues 61 to 65 (KPQNT) and Lys-86 contribute to the substrate site. Asn-100 carries N-linked (GlcNAc...) asparagine glycosylation. Arg-105 is a binding site for substrate. The active-site Proton donor is the His-145.

It belongs to the pancreatic ribonuclease family. In terms of assembly, interacts (via N-terminus) with bacterial lipopolysaccharide (LPS).

It is found in the secreted. The protein localises to the lysosome. It localises to the cytoplasmic granule. Ribonuclease which shows a preference for the pyrimidines uridine and cytosine. Has potent antibacterial activity against a range of Gram-positive and Gram-negative bacteria, including P.aeruginosa, A.baumanii, M.luteus, S.aureus, E.faecalis, E.faecium, S.saprophyticus and E.coli. Causes loss of bacterial membrane integrity, and also promotes agglutination of Gram-negative bacteria. Probably contributes to urinary tract sterility. Bactericidal activity is independent of RNase activity. The sequence is that of Ribonuclease K6 (RNASE6) from Aotus trivirgatus (Three-striped night monkey).